The following is a 122-amino-acid chain: Large ribosomal subunit protein uL14 (122 aa).

It belongs to the universal ribosomal protein uL14 family. As to quaternary structure, part of the 50S ribosomal subunit. Forms a cluster with proteins L3 and L19. In the 70S ribosome, L14 and L19 interact and together make contacts with the 16S rRNA in bridges B5 and B8.

Binds to 23S rRNA. Forms part of two intersubunit bridges in the 70S ribosome. The protein is Large ribosomal subunit protein uL14 of Buchnera aphidicola subsp. Acyrthosiphon pisum (strain 5A).